Reading from the N-terminus, the 236-residue chain is MTQQFYVSPEQLMKDRADFARKGIARGKSVVVISCEDGIALVAENPSPSLHKIGEIYDKIAFAAVGKYNEFESLRQAGVRYADVRGYSYDREDVTARGLASVYAQSLGAVFTAEQKPFEVELAVAEVGATQAEDHLYRLTFDGSIADEHSFVVMGGQADRVASAIDQGWRASLGFPDAVRLALNGLAPAPETEETAKPVPARAIEVAVLDRHSEEVRGARRAFRRLNDADITALLA.

It belongs to the peptidase T1A family. As to quaternary structure, the 20S proteasome core is composed of 14 alpha and 14 beta subunits that assemble into four stacked heptameric rings, resulting in a barrel-shaped structure. The two inner rings, each composed of seven catalytic beta subunits, are sandwiched by two outer rings, each composed of seven alpha subunits. The catalytic chamber with the active sites is on the inside of the barrel. Has a gated structure, the ends of the cylinder being occluded by the N-termini of the alpha-subunits. Is capped by the proteasome-associated ATPase, ARC.

Its subcellular location is the cytoplasm. Its pathway is protein degradation; proteasomal Pup-dependent pathway. With respect to regulation, the formation of the proteasomal ATPase ARC-20S proteasome complex, likely via the docking of the C-termini of ARC into the intersubunit pockets in the alpha-rings, may trigger opening of the gate for substrate entry. Interconversion between the open-gate and close-gate conformations leads to a dynamic regulation of the 20S proteasome proteolysis activity. In terms of biological role, component of the proteasome core, a large protease complex with broad specificity involved in protein degradation. The chain is Proteasome subunit alpha from Pseudarthrobacter chlorophenolicus (strain ATCC 700700 / DSM 12829 / CIP 107037 / JCM 12360 / KCTC 9906 / NCIMB 13794 / A6) (Arthrobacter chlorophenolicus).